We begin with the raw amino-acid sequence, 164 residues long: FMN reductase (NADH) RutF (164 aa).

The protein belongs to the non-flavoprotein flavin reductase family. RutF subfamily.

The catalysed reaction is FMNH2 + NAD(+) = FMN + NADH + 2 H(+). In terms of biological role, catalyzes the reduction of FMN to FMNH2 which is used to reduce pyrimidine by RutA via the Rut pathway. The protein is FMN reductase (NADH) RutF of Enterobacter sp. (strain 638).